The following is a 174-amino-acid chain: Gamma-crystallin S (174 aa).

2 consecutive Beta/gamma crystallin 'Greek key' domains span residues 2 to 40 (GRII…RVES) and 41 to 83 (GAWV…KMIH). Residues 84–89 (FVSGSE) form a connecting peptide region. Beta/gamma crystallin 'Greek key' domains follow at residues 90-130 (YKIQ…KVLD) and 131-173 (GIWI…KRLM).

Belongs to the beta/gamma-crystallin family.

Crystallins are the dominant structural components of the vertebrate eye lens. This chain is Gamma-crystallin S (crygs), found in Cyprinus carpio (Common carp).